The sequence spans 257 residues: Homeobox protein goosecoid (257 aa).

The homeobox DNA-binding region spans 160–219; the sequence is KRRHRTIFTDEQLEALENLFQETKYPDVGTREQLARKVHLREEKVEVWFKNRRAKWRRQK. The interval 213 to 257 is disordered; sequence AKWRRQKRSSSEESENAEKWNKTSSSKASPEKREEEGKSDLDSDS. Over residues 241–257 the composition is skewed to basic and acidic residues; it reads SPEKREEEGKSDLDSDS.

It belongs to the paired homeobox family. Bicoid subfamily.

The protein localises to the nucleus. Functionally, regulates chordin (CHRD). May play a role in spatial programing within discrete embryonic fields or lineage compartments during organogenesis. In concert with NKX3-2, plays a role in defining the structural components of the middle ear; required for the development of the entire tympanic ring. Probably involved in the regulatory networks that define neural crest cell fate specification and determine mesoderm cell lineages in mammals. The sequence is that of Homeobox protein goosecoid (GSC) from Homo sapiens (Human).